Reading from the N-terminus, the 357-residue chain is Ion-translocating oxidoreductase complex subunit D (357 aa).

A run of 3 helical transmembrane segments spans residues 35-55 (VWLY…TVLV), 88-108 (LPPW…VVLG), and 119-139 (LFNP…VEMT). T176 is subject to FMN phosphoryl threonine. 5 helical membrane-spanning segments follow: residues 209-229 (APGS…VYLI), 233-253 (VIAW…ATVF), 261-281 (YADA…FFIA), 295-315 (AVFA…GGYP), and 316-336 (EATA…DHWI).

It belongs to the NqrB/RnfD family. The complex is composed of six subunits: RnfA, RnfB, RnfC, RnfD, RnfE and RnfG. It depends on FMN as a cofactor.

It is found in the cell inner membrane. In terms of biological role, part of a membrane-bound complex that couples electron transfer with translocation of ions across the membrane. This chain is Ion-translocating oxidoreductase complex subunit D, found in Halorhodospira halophila (strain DSM 244 / SL1) (Ectothiorhodospira halophila (strain DSM 244 / SL1)).